A 591-amino-acid chain; its full sequence is Aspartate--tRNA ligase (591 aa).

An L-aspartate-binding site is contributed by Glu-176. The interval 200–203 (QILK) is aspartate. Residue Arg-222 participates in L-aspartate binding. ATP contacts are provided by residues 222–224 (RDE) and Gln-231. An L-aspartate-binding site is contributed by His-450. Glu-484 lines the ATP pocket. Arg-491 contacts L-aspartate. An ATP-binding site is contributed by 536-539 (GLDR).

The protein belongs to the class-II aminoacyl-tRNA synthetase family. Type 1 subfamily. Homodimer.

It localises to the cytoplasm. It carries out the reaction tRNA(Asp) + L-aspartate + ATP = L-aspartyl-tRNA(Asp) + AMP + diphosphate. In terms of biological role, catalyzes the attachment of L-aspartate to tRNA(Asp) in a two-step reaction: L-aspartate is first activated by ATP to form Asp-AMP and then transferred to the acceptor end of tRNA(Asp). The polypeptide is Aspartate--tRNA ligase (Listeria monocytogenes serotype 4b (strain F2365)).